Consider the following 391-residue polypeptide: MGSRGRRGGGERETETEEDETWKLRVGDDFTVPERFHRKPPFFSRIFPAGSHGKHRKIAKYYKKQENLLKDFSEMETMNEIGSLDQNAPTEEELRQMAKGERLAINLSNIINLILFIGKVLASVESLSMAVIASTLDSLLDLLSGFILWFTAHAMKKPNKYSYPIGKRRMQPVGIIVFASVMGTLGFQVLIESGRQLITNEHQVFDHRKELWMIGSMSSVAVVKFFLMLYCRSFKNEIVRAYAQDHFFDVITNSVGLVSALLAVRYKWWMDPVGAILIAVYTITTWARTVVENVGTLIGRSAPAEYLTKLTYLIWNHHEEIRHIDTVRAYTFGTHYFVEVDIVLPGDMPLSHAHDIGESLQEKLEQLPEVERAFVHVDFEFTHRPEHKAEV.

Residues 1–21 are disordered; it reads MGSRGRRGGGERETETEEDET. The Cytoplasmic segment spans residues 1 to 103; the sequence is MGSRGRRGGG…LRQMAKGERL (103 aa). Residues 104–124 traverse the membrane as a helical segment; it reads AINLSNIINLILFIGKVLASV. The Vacuolar segment spans residues 125–134; sequence ESLSMAVIAS. Residues 135 to 155 form a helical membrane-spanning segment; the sequence is TLDSLLDLLSGFILWFTAHAM. Topologically, residues 156 to 171 are cytoplasmic; sequence KKPNKYSYPIGKRRMQ. A helical transmembrane segment spans residues 172-192; sequence PVGIIVFASVMGTLGFQVLIE. Residues 193 to 210 are Vacuolar-facing; the sequence is SGRQLITNEHQVFDHRKE. The helical transmembrane segment at 211–231 threads the bilayer; the sequence is LWMIGSMSSVAVVKFFLMLYC. Residues 232–246 are Cytoplasmic-facing; it reads RSFKNEIVRAYAQDH. Residues 247–264 form a helical membrane-spanning segment; it reads FFDVITNSVGLVSALLAV. At 265–266 the chain is on the vacuolar side; that stretch reads RY. Residues 267–287 form a helical membrane-spanning segment; it reads KWWMDPVGAILIAVYTITTWA. The Cytoplasmic portion of the chain corresponds to 288–391; that stretch reads RTVVENVGTL…THRPEHKAEV (104 aa).

The protein belongs to the cation diffusion facilitator (CDF) transporter (TC 2.A.4) family. SLC30A subfamily.

The protein localises to the vacuole membrane. Functionally, involved in sequestration of excess metal in the cytoplasm into vacuoles to maintain metal homeostasis. The sequence is that of Metal tolerance protein 7 (MTP7) from Oryza sativa subsp. japonica (Rice).